The primary structure comprises 180 residues: ATP-dependent protease subunit HslV (180 aa).

The active site involves Thr-7. Positions 165, 168, and 171 each coordinate Na(+).

It belongs to the peptidase T1B family. HslV subfamily. As to quaternary structure, a double ring-shaped homohexamer of HslV is capped on each side by a ring-shaped HslU homohexamer. The assembly of the HslU/HslV complex is dependent on binding of ATP.

It localises to the cytoplasm. The catalysed reaction is ATP-dependent cleavage of peptide bonds with broad specificity.. Its activity is regulated as follows. Allosterically activated by HslU binding. In terms of biological role, protease subunit of a proteasome-like degradation complex believed to be a general protein degrading machinery. The sequence is that of ATP-dependent protease subunit HslV from Geobacillus sp. (strain WCH70).